The sequence spans 177 residues: Large ribosomal subunit protein uL6 (177 aa).

The protein belongs to the universal ribosomal protein uL6 family. Part of the 50S ribosomal subunit.

Its function is as follows. This protein binds to the 23S rRNA, and is important in its secondary structure. It is located near the subunit interface in the base of the L7/L12 stalk, and near the tRNA binding site of the peptidyltransferase center. This is Large ribosomal subunit protein uL6 from Vibrio campbellii (strain ATCC BAA-1116).